The primary structure comprises 442 residues: D(2) dopamine receptor A (442 aa).

Residues 1–31 lie on the Extracellular side of the membrane; that stretch reads MDPQNLSMYNDDINNGTNGTAVDQKPHYNYY. Asn-5, Asn-15, and Asn-18 each carry an N-linked (GlcNAc...) asparagine glycan. Residues 32–54 traverse the membrane as a helical segment; sequence AMLLTLLVFVIVFGNVLVCIAVS. At 55–64 the chain is on the cytoplasmic side; that stretch reads REKALQTTTN. Residues 65–87 traverse the membrane as a helical segment; the sequence is YLIVSLAVADLLVATLVMPWAVY. Over 88–102 the chain is Extracellular; sequence MEVVGEWRFSRIHCD. Cys-101 and Cys-176 are oxidised to a cystine. The helical transmembrane segment at 103 to 124 threads the bilayer; the sequence is IFVTLDVMMCTASILNLCAISI. Residues 125 to 145 are Cytoplasmic-facing; it reads DRYTAVAMPMLYNTRYSSKRR. A helical transmembrane segment spans residues 146 to 166; it reads VTVMISVVWVLSFAISCPLLF. The Extracellular segment spans residues 167-182; the sequence is GLNNTGSKVCIIDNPA. Residues 183-207 form a helical membrane-spanning segment; the sequence is FVIYSSIVSFYVPFIVTLLVYVQIY. The Cytoplasmic segment spans residues 208 to 372; sequence IVLRKRRKRV…SQHKEKKATQ (165 aa). Residues 273 to 335 are disordered; it reads DMEMEMMSST…KNGHPKDSTK (63 aa). The span at 304 to 318 shows a compositional bias: polar residues; that stretch reads ATSNQCKNASLTSPV. Positions 322 to 335 are enriched in basic and acidic residues; sequence YKAEKNGHPKDSTK. A helical membrane pass occupies residues 373 to 394; sequence MLAIVLGVFIICWLPFFIIHIL. Residues 395-408 lie on the Extracellular side of the membrane; it reads NMHCNCNIPQALYS. Cys-398 and Cys-400 are disulfide-bonded. Residues 409–430 traverse the membrane as a helical segment; it reads AFTWLGYVNSAVNPIIYTTFNV. The Cytoplasmic segment spans residues 431–442; that stretch reads EFRKAFIKILHC. Cys-442 carries the S-palmitoyl cysteine lipid modification.

Belongs to the G-protein coupled receptor 1 family. Palmitoylated. Palmitoylation is probably required for proper localization to the plasma membrane and stability of the receptor. As to expression, brain; pituitary.

The protein localises to the cell membrane. Its subcellular location is the golgi apparatus membrane. Functionally, this is one of the five types (D1 to D5) of receptors for dopamine. The activity of this receptor is mediated by G proteins which inhibits adenylyl cyclase. In Xenopus D2R is involved in the regulation of the melanotrope cells of the intermediate pituitary during background adaptation of the animal. This Xenopus laevis (African clawed frog) protein is D(2) dopamine receptor A (drd2-a).